Consider the following 1085-residue polypeptide: Voltage-dependent calcium channel subunit alpha-2/delta-3 (1085 aa).

The signal sequence occupies residues methionine 1–serine 33. Topologically, residues glutamate 34 to glycine 1062 are extracellular. An N-linked (GlcNAc...) asparagine glycan is attached at asparagine 166. Residues aspartate 256–leucine 438 enclose the VWFA domain. The a divalent metal cation site is built by aspartate 262, serine 264, and serine 266. The MIDAS-like motif motif lies at aspartate 262 to serine 266. The N-linked (GlcNAc...) asparagine glycan is linked to asparagine 309. Residues cysteine 412 and cysteine 1049 are joined by a disulfide bond. The 92-residue stretch at tryptophan 452–arginine 543 folds into the Cache domain. N-linked (GlcNAc...) asparagine glycosylation is found at asparagine 547 and asparagine 626. Tyrosine 918 bears the Phosphotyrosine mark. Residues glycine 1063 to phenylalanine 1083 form a helical membrane-spanning segment. Residues serine 1084–arginine 1085 lie on the Cytoplasmic side of the membrane.

Belongs to the calcium channel subunit alpha-2/delta family. As to quaternary structure, dimer formed of alpha-2-2 and delta-2 chains; disulfide-linked. Voltage-dependent calcium channels are multisubunit complexes, consisting of alpha-1 (CACNA1), alpha-2 (CACNA2D), beta (CACNB) and delta (CACNA2D) subunits in a 1:1:1:1 ratio. Post-translationally, N-glycosylated. May be proteolytically processed into subunits alpha-2-3 and delta-3 that are disulfide-linked. It is however unclear whether such cleavage really takes place in vivo and has a functional role. As to expression, in heart, it is expressed in atrium but not in ventricle.

It is found in the membrane. In terms of biological role, the alpha-2/delta subunit of voltage-dependent calcium channels regulates calcium current density and activation/inactivation kinetics of the calcium channel. Acts as a regulatory subunit for P/Q-type calcium channel (CACNA1A), N-type (CACNA1B), L-type (CACNA1C OR CACNA1D) but not T-type (CACNA1G). The sequence is that of Voltage-dependent calcium channel subunit alpha-2/delta-3 (Cacna2d3) from Rattus norvegicus (Rat).